The following is a 166-amino-acid chain: Transcription antitermination protein NusB (166 aa).

The span at 1 to 18 (MISDESDRFNPRDPKPAD) shows a compositional bias: basic and acidic residues. Residues 1–28 (MISDESDRFNPRDPKPADAGKPSKSAKR) form a disordered region.

The protein belongs to the NusB family.

Involved in transcription antitermination. Required for transcription of ribosomal RNA (rRNA) genes. Binds specifically to the boxA antiterminator sequence of the ribosomal RNA (rrn) operons. The polypeptide is Transcription antitermination protein NusB (Pseudomonas putida (strain GB-1)).